A 98-amino-acid chain; its full sequence is NADH-ubiquinone oxidoreductase chain 4L (98 aa).

3 consecutive transmembrane segments (helical) span residues 1-21, 36-56, and 61-81; these read MVLI…GVLI, MMLS…MFSI, and LILL…LVSI.

This sequence belongs to the complex I subunit 4L family.

It localises to the mitochondrion membrane. It catalyses the reaction a ubiquinone + NADH + 5 H(+)(in) = a ubiquinol + NAD(+) + 4 H(+)(out). In terms of biological role, core subunit of the mitochondrial membrane respiratory chain NADH dehydrogenase (Complex I) which catalyzes electron transfer from NADH through the respiratory chain, using ubiquinone as an electron acceptor. Part of the enzyme membrane arm which is embedded in the lipid bilayer and involved in proton translocation. The protein is NADH-ubiquinone oxidoreductase chain 4L (MT-ND4L) of Didelphis virginiana (North American opossum).